The following is a 477-amino-acid chain: Ankyrin repeat, SAM and basic leucine zipper domain-containing protein 1 (477 aa).

Phosphoserine is present on residues Ser-17, Ser-18, and Ser-20. ANK repeat units lie at residues 46-76, 80-109, 112-146, 150-179, 183-212, and 216-245; these read EKKEKFKKALTTGDVSLVLELLDSGIISVDA, YGWTPLMYAASVANAELVRVLLDRGANASF, DKQTILITACSAHGSEEQILKCVELLLSRNADPNV, RLMTPIMYAARDGHTQVVALLVASGAEVNT, NGYTALTWAARQGHKSIVLKLLELGANKML, and DGKLPSEIAKRNKHHEIFNLLTFTLNPLEG. The SAM domain occupies 274 to 336; it reads SYAAFGDLEV…KILAALKELE (63 aa).

As to quaternary structure, interacts with DDX4, PIWIL1, RANBP9 and TDRD1.

It localises to the cytoplasm. Plays a central role during spermatogenesis by repressing transposable elements and preventing their mobilization, which is essential for the germline integrity. Acts via the piRNA metabolic process, which mediates the repression of transposable elements during meiosis by forming complexes composed of piRNAs and Piwi proteins and governs the methylation and subsequent repression of transposons. Its association with pi-bodies suggests a participation in the primary piRNAs metabolic process. Required prior to the pachytene stage to facilitate the production of multiple types of piRNAs, including those associated with repeats involved in the regulation of retrotransposons. May act by mediating protein-protein interactions during germ cell maturation. The sequence is that of Ankyrin repeat, SAM and basic leucine zipper domain-containing protein 1 (ASZ1) from Callithrix jacchus (White-tufted-ear marmoset).